The chain runs to 385 residues: AA13 family lytic polysaccharide monooxygenase NCU08746 (385 aa).

The N-terminal stretch at 1 to 18 (MKFSIISVALASAITVDA) is a signal peptide. His-19 serves as a coordination point for Cu(2+). Methylhistidine is present on His-19. The 230-residue stretch at 19–248 (HGYLTIPFSR…AQVYLSCADI (230 aa)) folds into the Chitin-binding type-4 domain. Cysteines 40 and 43 form a disulfide. A glycan (N-linked (GlcNAc...) asparagine) is linked at Asn-54. 6 cysteine pairs are disulfide-bonded: Cys-66/Cys-245, Cys-102/Cys-203, Cys-118/Cys-145, Cys-153/Cys-161, Cys-167/Cys-173, and Cys-181/Cys-192. Cu(2+) is bound at residue His-109. Tyr-242 is a binding site for Cu(2+). The CBM20 domain maps to 278 to 385 (CTPAATVAVT…ESVAVESSWK (108 aa)). N-linked (GlcNAc...) asparagine glycosylation is present at Asn-365.

It belongs to the polysaccharide monooxygenase AA13 family. Requires Cu(2+) as cofactor.

The protein resides in the secreted. The enzyme catalyses starch + reduced acceptor + O2 = D-glucono-1,5-lactone-terminated malto-oligosaccharides + short-chain malto-oligosaccharides + acceptor + H2O.. In terms of biological role, starch-active lytic polysaccharide monooxygenase that oxidizes the C1 position of starch substrates, but not in cellulose or chitin. Catalysis by LPMOs requires the reduction of the active-site copper from Cu(II) to Cu(I) by a reducing agent and H(2)O(2) or O(2) as a cosubstrate. The sequence is that of AA13 family lytic polysaccharide monooxygenase NCU08746 from Neurospora crassa (strain ATCC 24698 / 74-OR23-1A / CBS 708.71 / DSM 1257 / FGSC 987).